The sequence spans 469 residues: Alpha-galactosidase (469 aa).

The signal sequence occupies residues 1-17; sequence MFPFFFALFFSSTDVLA. A disulfide bridge links C41 with C73. Residues D71 and D72 each contribute to the substrate site. The N-linked (GlcNAc...) asparagine glycan is linked to N81. C120 and C150 are oxidised to a cystine. K146 provides a ligand contact to substrate. Catalysis depends on D148, which acts as the Nucleophile. N174 carries an N-linked (GlcNAc...) asparagine glycan. R204 provides a ligand contact to substrate. The active-site Proton donor is D208. 2 disulfide bridges follow: C220–C236 and C222–C229. Q250 provides a ligand contact to substrate. N-linked (GlcNAc...) asparagine glycosylation is found at N269, N369, N402, N412, N421, N426, and N434.

This sequence belongs to the glycosyl hydrolase 27 family. As to quaternary structure, homotetramer.

It is found in the secreted. It carries out the reaction Hydrolysis of terminal, non-reducing alpha-D-galactose residues in alpha-D-galactosides, including galactose oligosaccharides, galactomannans and galactolipids.. This Lachancea cidri (Yeast) protein is Alpha-galactosidase (MEL).